A 225-amino-acid chain; its full sequence is Uridylate kinase (225 aa).

An ATP-binding site is contributed by 9–10 (GS). Gly-46 serves as a coordination point for UMP. Residues Gly-47 and Arg-51 each contribute to the ATP site. UMP-binding positions include Asp-67 and 115 to 121 (THPAHTT). Positions 141, 142, 147, and 150 each coordinate ATP.

Belongs to the UMP kinase family. As to quaternary structure, homohexamer.

Its subcellular location is the cytoplasm. It carries out the reaction UMP + ATP = UDP + ADP. It functions in the pathway pyrimidine metabolism; CTP biosynthesis via de novo pathway; UDP from UMP (UMPK route): step 1/1. Its activity is regulated as follows. Inhibited by UTP. Catalyzes the reversible phosphorylation of UMP to UDP. In Methanococcus vannielii (strain ATCC 35089 / DSM 1224 / JCM 13029 / OCM 148 / SB), this protein is Uridylate kinase.